A 409-amino-acid polypeptide reads, in one-letter code: Arginine biosynthesis bifunctional protein ArgJ (409 aa).

Residues threonine 156, lysine 182, threonine 193, glutamate 280, asparagine 404, and serine 409 each coordinate substrate. Catalysis depends on threonine 193, which acts as the Nucleophile.

It belongs to the ArgJ family. As to quaternary structure, heterotetramer of two alpha and two beta chains.

It localises to the cytoplasm. It catalyses the reaction N(2)-acetyl-L-ornithine + L-glutamate = N-acetyl-L-glutamate + L-ornithine. The catalysed reaction is L-glutamate + acetyl-CoA = N-acetyl-L-glutamate + CoA + H(+). It participates in amino-acid biosynthesis; L-arginine biosynthesis; L-ornithine and N-acetyl-L-glutamate from L-glutamate and N(2)-acetyl-L-ornithine (cyclic): step 1/1. The protein operates within amino-acid biosynthesis; L-arginine biosynthesis; N(2)-acetyl-L-ornithine from L-glutamate: step 1/4. Its function is as follows. Catalyzes two activities which are involved in the cyclic version of arginine biosynthesis: the synthesis of N-acetylglutamate from glutamate and acetyl-CoA as the acetyl donor, and of ornithine by transacetylation between N(2)-acetylornithine and glutamate. The chain is Arginine biosynthesis bifunctional protein ArgJ from Ralstonia nicotianae (strain ATCC BAA-1114 / GMI1000) (Ralstonia solanacearum).